A 669-amino-acid chain; its full sequence is DNA ligase (669 aa).

NAD(+) is bound by residues 34-38 (DAEYD), 83-84 (SL), and E114. K116 functions as the N6-AMP-lysine intermediate in the catalytic mechanism. Residues R137, E171, K287, and K311 each coordinate NAD(+). 4 residues coordinate Zn(2+): C405, C408, C423, and C428. One can recognise a BRCT domain in the interval 591-669 (NVESYFAGKT…EERFLQELNK (79 aa)).

The protein belongs to the NAD-dependent DNA ligase family. LigA subfamily. The cofactor is Mg(2+). Mn(2+) serves as cofactor.

The catalysed reaction is NAD(+) + (deoxyribonucleotide)n-3'-hydroxyl + 5'-phospho-(deoxyribonucleotide)m = (deoxyribonucleotide)n+m + AMP + beta-nicotinamide D-nucleotide.. Functionally, DNA ligase that catalyzes the formation of phosphodiester linkages between 5'-phosphoryl and 3'-hydroxyl groups in double-stranded DNA using NAD as a coenzyme and as the energy source for the reaction. It is essential for DNA replication and repair of damaged DNA. This is DNA ligase from Bacillus cereus (strain ATCC 14579 / DSM 31 / CCUG 7414 / JCM 2152 / NBRC 15305 / NCIMB 9373 / NCTC 2599 / NRRL B-3711).